Here is a 194-residue protein sequence, read N- to C-terminus: Imidazoleglycerol-phosphate dehydratase (194 aa).

Belongs to the imidazoleglycerol-phosphate dehydratase family.

Its subcellular location is the cytoplasm. The enzyme catalyses D-erythro-1-(imidazol-4-yl)glycerol 3-phosphate = 3-(imidazol-4-yl)-2-oxopropyl phosphate + H2O. The protein operates within amino-acid biosynthesis; L-histidine biosynthesis; L-histidine from 5-phospho-alpha-D-ribose 1-diphosphate: step 6/9. This Clostridium kluyveri (strain NBRC 12016) protein is Imidazoleglycerol-phosphate dehydratase.